Reading from the N-terminus, the 140-residue chain is MRHGMSGRKLNRTSSHRKAMFANMAASLLKHEQIKTTLPKAKDLRPIAEKLITLGKGGTLHDRRQAHAILRDDAVVAKLFAVLGPRYKDRQGGYSRILKAGFRYGDAAPMAVIELVDRDPAAKGLDSGPTAEANDDDSEE.

The interval 121–140 is disordered; it reads AAKGLDSGPTAEANDDDSEE.

It belongs to the bacterial ribosomal protein bL17 family. As to quaternary structure, part of the 50S ribosomal subunit. Contacts protein L32.

The chain is Large ribosomal subunit protein bL17 from Rhodospirillum rubrum (strain ATCC 11170 / ATH 1.1.1 / DSM 467 / LMG 4362 / NCIMB 8255 / S1).